We begin with the raw amino-acid sequence, 160 residues long: MKSLQKGFTLIELMIVVAIIGILAAFAIPAYNDYIARSQAAEGVSLADGLKVRIAENLQDGECKGPDANTASGVVGNEDKGKYGLAKIDGEYDASKTEAGDPNGCKVEITYGQGTAGDKISKLITGKKLVLDQLVNGSFIAGDGTDLADKFIPNAVKAKK.

Residues 1-7 (MKSLQKG) constitute a propeptide, leader sequence. Position 8 is an N-methylphenylalanine (phenylalanine 8). A helical transmembrane segment spans residues 8 to 28 (FTLIELMIVVAIIGILAAFAI). Cysteine 63 and cysteine 105 are oxidised to a cystine.

Belongs to the N-Me-Phe pilin family. In terms of assembly, the pili are polar flexible filaments of about 5.4 nanometers diameter and 2.5 micrometers average length; they consist of only a single polypeptide chain arranged in a helical configuration of five subunits per turn in the assembled pilus.

The protein resides in the fimbrium. It is found in the membrane. In terms of biological role, major component of the type IV fimbriae that plays an essential role in twitching motility, natural transformation, and protease secretion. The polypeptide is Type IV major fimbrial protein FimA (fimA) (Dichelobacter nodosus (Bacteroides nodosus)).